The following is a 178-amino-acid chain: Nicotinamide-nucleotide adenylyltransferase (178 aa).

Belongs to the archaeal NMN adenylyltransferase family.

The protein localises to the cytoplasm. The enzyme catalyses beta-nicotinamide D-ribonucleotide + ATP + H(+) = diphosphate + NAD(+). The protein operates within cofactor biosynthesis; NAD(+) biosynthesis; NAD(+) from nicotinamide D-ribonucleotide: step 1/1. The protein is Nicotinamide-nucleotide adenylyltransferase of Pyrobaculum neutrophilum (strain DSM 2338 / JCM 9278 / NBRC 100436 / V24Sta) (Thermoproteus neutrophilus).